A 431-amino-acid polypeptide reads, in one-letter code: MIRRWLTSRLYDAFLVCAFFVSAPRIFYKVFFHGKYIDSWKIRFGVQKPFVKGEGPLVWFHGASVGEVSLLAPLLNRWREEFPEWRFVVTTCSEAGVHTARRLYESLGATVFVLPLDLSCIIKSVVRKLAPDIVIFSEGDCWLHFLTESKRLGAKAFLINGKLSEHSCKRFSFLKRLGRNYFAPLDLLILQDELYKQRFMQIGISSDKIHVTGNMKTFIESSLATNRRDFWRAKLQISSQDRLIVLGSMHPKDVEVWAEVVSHFHNSSTKILWVPRHLEKLKEHAKLLEKAGILFGLWSQGASFRQYNSLIMDAMGVLKDIYSAADIAFVGGTFDPSVGGHNLLEPLQKEVPLMFGPYIYSQSVLAEKLREKEAGLSVNKETLLDVVTDLLQNEKNRQAYIEKGKSFLKQEENSFQQTWEILKSQITCMKI.

Residues 5-27 (WLTSRLYDAFLVCAFFVSAPRIF) traverse the membrane as a helical; Signal-anchor segment. The active-site Proton acceptor is the E67. CMP is bound by residues 275–276 (PR), 315–317 (MGV), and 342–345 (NLLE).

The protein belongs to the glycosyltransferase group 1 family. Glycosyltransferase 30 subfamily.

Its subcellular location is the cell inner membrane. It catalyses the reaction lipid IVA (E. coli) + CMP-3-deoxy-beta-D-manno-octulosonate = alpha-Kdo-(2-&gt;6)-lipid IVA (E. coli) + CMP + H(+). The catalysed reaction is alpha-Kdo-(2-&gt;6)-lipid IVA (E. coli) + CMP-3-deoxy-beta-D-manno-octulosonate = alpha-Kdo-(2-&gt;4)-alpha-Kdo-(2-&gt;6)-lipid IVA (E. coli) + CMP + H(+). The enzyme catalyses alpha-Kdo-(2-&gt;4)-alpha-Kdo-(2-&gt;6)-lipid IVA (E. coli) + CMP-3-deoxy-beta-D-manno-octulosonate = alpha-Kdo-(2-&gt;8)-alpha-Kdo-(2-&gt;4)-alpha-Kdo-(2-&gt;6)-lipid IVA (E. coli) + CMP + H(+). The protein operates within bacterial outer membrane biogenesis; LPS core biosynthesis. In terms of biological role, involved in lipopolysaccharide (LPS) biosynthesis. Catalyzes the transfer of three 3-deoxy-D-manno-octulosonate (Kdo) residues from CMP-Kdo to lipid IV(A), the tetraacyldisaccharide-1,4'-bisphosphate precursor of lipid A. Thus generates the genus-specific LPS epitope of Chlamydia, composed of the trisaccharide alpha-Kdo-(2-&gt;8)-alpha-Kdo-(2-&gt;4)-alpha-Kdo. In Chlamydia trachomatis serovar D (strain ATCC VR-885 / DSM 19411 / UW-3/Cx), this protein is 3-deoxy-D-manno-octulosonic acid transferase (waaA).